Consider the following 137-residue polypeptide: Nucleoside diphosphate kinase (137 aa).

Positions 10, 59, 87, 93, 104, and 114 each coordinate ATP. The Pros-phosphohistidine intermediate role is filled by H117.

The protein belongs to the NDK family. As to quaternary structure, homotetramer. It depends on Mg(2+) as a cofactor.

It localises to the cytoplasm. The catalysed reaction is a 2'-deoxyribonucleoside 5'-diphosphate + ATP = a 2'-deoxyribonucleoside 5'-triphosphate + ADP. It carries out the reaction a ribonucleoside 5'-diphosphate + ATP = a ribonucleoside 5'-triphosphate + ADP. Functionally, major role in the synthesis of nucleoside triphosphates other than ATP. The ATP gamma phosphate is transferred to the NDP beta phosphate via a ping-pong mechanism, using a phosphorylated active-site intermediate. The protein is Nucleoside diphosphate kinase of Streptomyces coelicolor (strain ATCC BAA-471 / A3(2) / M145).